The following is a 360-amino-acid chain: Isopentenyl-diphosphate delta-isomerase (360 aa).

Position 6–7 (6–7 (RK)) interacts with substrate. Residues Thr62, 63–65 (GMT), Ser93, and Asn122 contribute to the FMN site. A substrate-binding site is contributed by 93-95 (SQR). Gln157 provides a ligand contact to substrate. Mg(2+) is bound at residue Glu158. FMN contacts are provided by residues Lys189, Ser214, Thr219, 272-274 (GIR), and 293-294 (AL).

It belongs to the IPP isomerase type 2 family. As to quaternary structure, homooctamer. Dimer of tetramers. FMN serves as cofactor. NADPH is required as a cofactor. The cofactor is Mg(2+).

It localises to the cytoplasm. It carries out the reaction isopentenyl diphosphate = dimethylallyl diphosphate. In terms of biological role, involved in the biosynthesis of isoprenoids. Catalyzes the 1,3-allylic rearrangement of the homoallylic substrate isopentenyl (IPP) to its allylic isomer, dimethylallyl diphosphate (DMAPP). The protein is Isopentenyl-diphosphate delta-isomerase of Ignicoccus hospitalis (strain KIN4/I / DSM 18386 / JCM 14125).